We begin with the raw amino-acid sequence, 333 residues long: S-adenosylmethionine-dependent nucleotide dehydratase (333 aa).

One can recognise a Radical SAM core domain in the interval 1 to 239 (MNIKTIVINW…SAPQKQNNVI (239 aa)). Residues Cys-16, Cys-20, and Cys-23 each coordinate [4Fe-4S] cluster.

It belongs to the radical SAM superfamily. Viperin family. [4Fe-4S] cluster serves as cofactor.

It carries out the reaction GTP + AH2 + S-adenosyl-L-methionine = 3'-deoxy-3',4'-didehydro-GTP + 5'-deoxyadenosine + L-methionine + A + H2O + H(+). Functionally, expression of pVip56 in E.coli (strain MG1655) confers resistance to phage P1; has no effect against T7. Catalyzes the conversion of guanosine triphosphate (GTP) to 3'-deoxy-3',4'-didehydro-GTP (ddhGTP), probably via a SAM-dependent radical mechanism. The modified nucleotide represses transcription from T7 RNA polymerase-directed genes (possibly by acting as chain terminators), strongly suggesting these nucleotides block viral polymerase transcription. How this protein allows bacteria to resist viruses that do not encode their own RNA polymerase (such as lambda, P1) is unknown. This Fibrobacter sp. (strain UWH6) protein is S-adenosylmethionine-dependent nucleotide dehydratase.